Consider the following 185-residue polypeptide: Elongation factor P 1 (185 aa).

It belongs to the elongation factor P family.

It is found in the cytoplasm. It participates in protein biosynthesis; polypeptide chain elongation. Its function is as follows. Involved in peptide bond synthesis. Stimulates efficient translation and peptide-bond synthesis on native or reconstituted 70S ribosomes in vitro. Probably functions indirectly by altering the affinity of the ribosome for aminoacyl-tRNA, thus increasing their reactivity as acceptors for peptidyl transferase. In Chlamydia caviae (strain ATCC VR-813 / DSM 19441 / 03DC25 / GPIC) (Chlamydophila caviae), this protein is Elongation factor P 1 (efp1).